The sequence spans 565 residues: Periplasmic trehalase (565 aa).

The signal sequence occupies residues 1 to 30; sequence MKSPAPSRPQKMALIPACIFLCFAALSVQA. Substrate-binding positions include arginine 152, 159-160, asparagine 196, 205-207, 277-279, and glycine 310; these read WD, RSQ, and RPE. Active-site proton donor/acceptor residues include aspartate 312 and glutamate 496. Residue glutamate 511 participates in substrate binding. The tract at residues 539–565 is disordered; sequence CDNVPATRPLSESTTQPLKQKEAEPTP.

The protein belongs to the glycosyl hydrolase 37 family. As to quaternary structure, monomer.

It localises to the periplasm. The enzyme catalyses alpha,alpha-trehalose + H2O = alpha-D-glucose + beta-D-glucose. Provides the cells with the ability to utilize trehalose at high osmolarity by splitting it into glucose molecules that can subsequently be taken up by the phosphotransferase-mediated uptake system. The protein is Periplasmic trehalase of Escherichia coli O45:K1 (strain S88 / ExPEC).